Reading from the N-terminus, the 417-residue chain is UDP-N-acetylglucosamine 1-carboxyvinyltransferase (417 aa).

A phosphoenolpyruvate-binding site is contributed by lysine 22–asparagine 23. Arginine 92 is a binding site for UDP-N-acetyl-alpha-D-glucosamine. The active-site Proton donor is cysteine 116. The residue at position 116 (cysteine 116) is a 2-(S-cysteinyl)pyruvic acid O-phosphothioketal. 2 residues coordinate UDP-N-acetyl-alpha-D-glucosamine: aspartate 304 and isoleucine 326.

Belongs to the EPSP synthase family. MurA subfamily.

The protein resides in the cytoplasm. The catalysed reaction is phosphoenolpyruvate + UDP-N-acetyl-alpha-D-glucosamine = UDP-N-acetyl-3-O-(1-carboxyvinyl)-alpha-D-glucosamine + phosphate. The protein operates within cell wall biogenesis; peptidoglycan biosynthesis. Functionally, cell wall formation. Adds enolpyruvyl to UDP-N-acetylglucosamine. The polypeptide is UDP-N-acetylglucosamine 1-carboxyvinyltransferase (Geobacter sulfurreducens (strain ATCC 51573 / DSM 12127 / PCA)).